A 130-amino-acid chain; its full sequence is MTAVGGSPPTRRCPATEDRAPATVATPSSTDPTASRAVSWWSVHEYVAPTLAAAVEWPMAGTPAWCDLDDTDPVKWAAICDAARHWALRVETCQAASAEASRDVSAAADWPAVSREIQRRRDAYIRRVVV.

The tract at residues 1-34 (MTAVGGSPPTRRCPATEDRAPATVATPSSTDPTA) is disordered.

It to M.tuberculosis Rv1583c.

This is an uncharacterized protein from Mycobacterium tuberculosis (strain CDC 1551 / Oshkosh).